Reading from the N-terminus, the 141-residue chain is Galactose-6-phosphate isomerase subunit LacA (141 aa).

This sequence belongs to the LacAB/RpiB family. As to quaternary structure, heteromultimeric protein consisting of LacA and LacB.

The enzyme catalyses aldehydo-D-galactose 6-phosphate = keto-D-tagatose 6-phosphate. It participates in carbohydrate metabolism; D-galactose 6-phosphate degradation; D-tagatose 6-phosphate from D-galactose 6-phosphate: step 1/1. This chain is Galactose-6-phosphate isomerase subunit LacA, found in Streptococcus pneumoniae (strain 70585).